The sequence spans 883 residues: UTP--glucose-1-phosphate uridylyltransferase 3, chloroplastic (883 aa).

The transit peptide at 1-72 (MANPQASPIL…HQVRHVSTVP (72 aa)) directs the protein to the chloroplast.

It belongs to the UDPGP type 1 family. Mg(2+) serves as cofactor.

It localises to the plastid. The protein localises to the chloroplast. The enzyme catalyses alpha-D-glucose 1-phosphate + UTP + H(+) = UDP-alpha-D-glucose + diphosphate. Its activity is regulated as follows. Inhibited by pyrophosphate. Involved in the biosynthesis of sulfolipids in the chloroplast. Catalyzes the first committed step in sulfolipid biosynthesis. Converts glucose 1-phosphate to UDP-glucose, the precursor of the polar head of sulfolipid. In addition to glucose 1-phosphate, can use galactose 1-phosphate, but with much lower activity. No uridyltransferase activity with other hexose monophosphates. Specific for UTP and cannot use ATP, CTP, and GTP. The polypeptide is UTP--glucose-1-phosphate uridylyltransferase 3, chloroplastic (Arabidopsis thaliana (Mouse-ear cress)).